The sequence spans 283 residues: Bifunctional protein FolD (283 aa).

Residues 163–165 (GRS), Ser-188, and Ile-229 contribute to the NADP(+) site.

Belongs to the tetrahydrofolate dehydrogenase/cyclohydrolase family. As to quaternary structure, homodimer.

The enzyme catalyses (6R)-5,10-methylene-5,6,7,8-tetrahydrofolate + NADP(+) = (6R)-5,10-methenyltetrahydrofolate + NADPH. It catalyses the reaction (6R)-5,10-methenyltetrahydrofolate + H2O = (6R)-10-formyltetrahydrofolate + H(+). It participates in one-carbon metabolism; tetrahydrofolate interconversion. Its function is as follows. Catalyzes the oxidation of 5,10-methylenetetrahydrofolate to 5,10-methenyltetrahydrofolate and then the hydrolysis of 5,10-methenyltetrahydrofolate to 10-formyltetrahydrofolate. The sequence is that of Bifunctional protein FolD from Campylobacter fetus subsp. fetus (strain 82-40).